The following is a 317-amino-acid chain: uncharacterized protein (317 aa).

Positions 68-78 are enriched in low complexity; that stretch reads DSTNTDISNET. The tract at residues 68–87 is disordered; sequence DSTNTDISNETPILSNNTPI.

This is an uncharacterized protein from Methanocaldococcus jannaschii (strain ATCC 43067 / DSM 2661 / JAL-1 / JCM 10045 / NBRC 100440) (Methanococcus jannaschii).